We begin with the raw amino-acid sequence, 670 residues long: UvrABC system protein B (670 aa).

The region spanning Asp51–Arg433 is the Helicase ATP-binding domain. Gly64–Thr71 is an ATP binding site. The Beta-hairpin signature appears at Tyr117–Ile140. The 160-residue stretch at Asp453–Ile612 folds into the Helicase C-terminal domain. The region spanning Pro631–Glu666 is the UVR domain.

Belongs to the UvrB family. As to quaternary structure, forms a heterotetramer with UvrA during the search for lesions. Interacts with UvrC in an incision complex.

The protein resides in the cytoplasm. Its function is as follows. The UvrABC repair system catalyzes the recognition and processing of DNA lesions. A damage recognition complex composed of 2 UvrA and 2 UvrB subunits scans DNA for abnormalities. Upon binding of the UvrA(2)B(2) complex to a putative damaged site, the DNA wraps around one UvrB monomer. DNA wrap is dependent on ATP binding by UvrB and probably causes local melting of the DNA helix, facilitating insertion of UvrB beta-hairpin between the DNA strands. Then UvrB probes one DNA strand for the presence of a lesion. If a lesion is found the UvrA subunits dissociate and the UvrB-DNA preincision complex is formed. This complex is subsequently bound by UvrC and the second UvrB is released. If no lesion is found, the DNA wraps around the other UvrB subunit that will check the other stand for damage. This is UvrABC system protein B from Methanosarcina mazei (strain ATCC BAA-159 / DSM 3647 / Goe1 / Go1 / JCM 11833 / OCM 88) (Methanosarcina frisia).